An 88-amino-acid polypeptide reads, in one-letter code: Putative membrane protein insertion efficiency factor (88 aa).

Residues 64–88 (GVDPVPKKSSSKKTSSTTACGCGHS) are disordered.

Belongs to the UPF0161 family.

It localises to the cell inner membrane. Functionally, could be involved in insertion of integral membrane proteins into the membrane. This Herminiimonas arsenicoxydans protein is Putative membrane protein insertion efficiency factor.